The following is a 509-amino-acid chain: Cytochrome P450 monooxygenase cpaH (509 aa).

An N-linked (GlcNAc...) asparagine glycan is attached at Asn15. The helical transmembrane segment at Thr31–Leu51 threads the bilayer. 2 N-linked (GlcNAc...) asparagine glycosylation sites follow: Asn306 and Asn412. Residue Cys453 participates in heme binding.

The protein belongs to the cytochrome P450 family. The cofactor is heme.

It localises to the membrane. It participates in secondary metabolite biosynthesis. Functionally, cytochrome P450 monooxygenase; part of the gene cluster that mediates the biosynthesis of the fungal neurotoxin cyclopiazonic acid (CPA), a nanomolar inhibitor of Ca(2+)-ATPase with a unique pentacyclic indole tetramic acid scaffold. The hybrid two module polyketide synthase-nonribosomal peptide synthetase (PKS-NRPS) cpaS incorporates acetyl-CoA, malonyl-CoA, and tryptophan (Trp) and utilizes a C-terminal redox-incompetent reductase domain to make and release the tryptophan tetramic acid, cyclo-acetoacetyl-L-tryptophan (c-AATrp), as the first intermediate in the pathway. CpaS catalyzes a Dieckmann-type cyclization on the N-acetoacetyl-Trp intermediate bound in thioester linkage to the phosphopantetheinyl arm of the T domain to form and release c-AATrp. CpaD then regiospecifically dimethylallylates c-AATrp to form beta-cyclopiazonic acid. CpaD discriminates against free Trp but accepts tryptophan-containing thiohydantoins, diketopiperazines, and linear peptides as substrates for C4-prenylation and also acts as a regiospecific O-dimethylallyltransferase (DMAT) on a tyrosine-derived tetramic acid. The beta-cyclopiazonate dehydrogenase cpaO then carries out the dehydrogenation of beta-CPA to yield an unstable enimine product, which is captured by intramolecular cyclization to create the pentacyclic fused scaffold of alpha-cyclopiazonate. Finally, the cytochrome P450 monooxygenase cpaH mediates the conversion of CPA into the less toxic 2-oxocyclopiazonic acid, the end product of the CPA pathway in A.oryza. The chain is Cytochrome P450 monooxygenase cpaH from Aspergillus oryzae (Yellow koji mold).